Consider the following 481-residue polypeptide: Coniferyl aldehyde dehydrogenase (481 aa).

Catalysis depends on residues E221 and C255.

Belongs to the aldehyde dehydrogenase family. As to quaternary structure, homodimer.

The catalysed reaction is (E)-coniferaldehyde + NADP(+) + H2O = (E)-ferulate + NADPH + 2 H(+). It carries out the reaction (E)-coniferaldehyde + NAD(+) + H2O = (E)-ferulate + NADH + 2 H(+). Catalyzes the NAD(+)-dependent oxidation of coniferyl aldehyde to ferulic acid and which is induced during growth with eugenol as the carbon source. This Pseudomonas sp. (strain HR199 / DSM 7063) protein is Coniferyl aldehyde dehydrogenase (calB).